Consider the following 274-residue polypeptide: Ommochrome-binding protein (274 aa).

An N-terminal signal peptide occupies residues 1 to 18 (MKLLILTICALHVNQMMA). The N-linked (GlcNAc...) asparagine glycan is linked to N183.

As to quaternary structure, monomer. Present in larval hemolymph and synthesized by the fat body.

Its function is as follows. Binds to an ommochrome, ommatin D which is a yellow chromophore. May be involved in guiding the chromophore through the hemolymph from the epidermis to the gut. This is Ommochrome-binding protein from Manduca sexta (Tobacco hawkmoth).